The chain runs to 484 residues: tRNA sulfurtransferase (484 aa).

Residues 63 to 167 (REMIERLTCT…LDRLFVIHRQ (105 aa)) form the THUMP domain. Residues 185–186 (LM), lysine 267, glycine 289, and glutamine 298 each bind ATP. Cysteine 346 and cysteine 457 are disulfide-bonded. The 79-residue stretch at 405-483 (VLPGQIVIDI…GHTNVRVYRP (79 aa)) folds into the Rhodanese domain. Cysteine 457 serves as the catalytic Cysteine persulfide intermediate.

This sequence belongs to the ThiI family.

It is found in the cytoplasm. It catalyses the reaction [ThiI sulfur-carrier protein]-S-sulfanyl-L-cysteine + a uridine in tRNA + 2 reduced [2Fe-2S]-[ferredoxin] + ATP + H(+) = [ThiI sulfur-carrier protein]-L-cysteine + a 4-thiouridine in tRNA + 2 oxidized [2Fe-2S]-[ferredoxin] + AMP + diphosphate. It carries out the reaction [ThiS sulfur-carrier protein]-C-terminal Gly-Gly-AMP + S-sulfanyl-L-cysteinyl-[cysteine desulfurase] + AH2 = [ThiS sulfur-carrier protein]-C-terminal-Gly-aminoethanethioate + L-cysteinyl-[cysteine desulfurase] + A + AMP + 2 H(+). It functions in the pathway cofactor biosynthesis; thiamine diphosphate biosynthesis. Catalyzes the ATP-dependent transfer of a sulfur to tRNA to produce 4-thiouridine in position 8 of tRNAs, which functions as a near-UV photosensor. Also catalyzes the transfer of sulfur to the sulfur carrier protein ThiS, forming ThiS-thiocarboxylate. This is a step in the synthesis of thiazole, in the thiamine biosynthesis pathway. The sulfur is donated as persulfide by IscS. This chain is tRNA sulfurtransferase, found in Pseudomonas aeruginosa (strain UCBPP-PA14).